A 555-amino-acid polypeptide reads, in one-letter code: 3-oxocholest-4-en-26-oate--CoA ligase (555 aa).

Residues 172 to 180, D418, R433, and K524 contribute to the ATP site; that span reads TGGTTGHPK. The tract at residues 525-555 is disordered; that stretch reads PDYRWAKDQTGLRPADEVYNNGDGNGAAATG. Positions 544–555 are enriched in low complexity; that stretch reads NNGDGNGAAATG.

This sequence belongs to the ATP-dependent AMP-binding enzyme family.

The catalysed reaction is (25S)-3-oxocholest-4-en-26-oate + ATP + CoA = (25S)-3-oxocholest-4-en-26-oyl-CoA + AMP + diphosphate. It participates in steroid metabolism; cholesterol metabolism. Involved in the degradation of the side chains of C-24 branched-chain sterols. Catalyzes the ATP-dependent CoA thioesterification of the sterol 3-oxocholest-4-en-26-oate to yield 3-oxocholest-4-en-26-oyl-CoA. It can also use beta-sitosterol, campesterol and 3beta-hydroxy-5-cholesten-26-oate. The protein is 3-oxocholest-4-en-26-oate--CoA ligase of Rhodococcus rhodochrous.